Consider the following 31-residue polypeptide: Protein YmiC (31 aa).

A helical transmembrane segment spans residues 9-29 (WSWMGAFSLSMLFWAELLWII).

Its subcellular location is the cell inner membrane. This is Protein YmiC from Escherichia coli (strain K12).